We begin with the raw amino-acid sequence, 159 residues long: Vesicle transport protein SFT2A (159 aa).

Residues 1 to 36 (MEKLRRVLSGQDDEEQGLTAQVLDASSLSFNTRLKW) lie on the Cytoplasmic side of the membrane. S9 is subject to Phosphoserine. Residues 37 to 57 (FAICFVCGVFFSILGTGLLWL) form a helical membrane-spanning segment. Residues 58–62 (PGGIK) are Lumenal-facing. Residues 63-83 (LFAVFYTLGNLAALASTCFLM) traverse the membrane as a helical segment. At 84 to 97 (GPVKQLKKMFEATR) the chain is on the cytoplasmic side. The helical transmembrane segment at 98–118 (LLATIVMLLCFIFTLCAALWW) threads the bilayer. The Lumenal portion of the chain corresponds to 119-122 (HKKG). Residues 123–143 (LAVLFCILQFLSMTWYSLSYI) form a helical membrane-spanning segment. At 144–159 (PYARDAVIKCCSSLLS) the chain is on the cytoplasmic side.

This sequence belongs to the SFT2 family.

Its subcellular location is the membrane. In terms of biological role, may be involved in fusion of retrograde transport vesicles derived from an endocytic compartment with the Golgi complex. The polypeptide is Vesicle transport protein SFT2A (Homo sapiens (Human)).